We begin with the raw amino-acid sequence, 520 residues long: MKKSHLVKRGLQDANQPSSQPDKVGWIRRFSGKGIFREIWRNRFVMLKGDHLFIFEKEMKNNGKTHEVFDLVHYERSEELRKAKSHSKKNHSKFTLLRCQHPGNKSPNLVFLAVSPEEKESWINVLNTAITRAKNRVLDEVTIEEESLLAHPTRDRAKIPLGRRLPTRGHLMAVGSASSDGMLTLDLVNEEDAAMLDEDEWLKDHRASLDKLAPGRRRAGTDASRPPASNTEAQEKTSSLPRKSEISWSQEDHPRTPQNKKKFAQVRNRCASMDDALSRGERKPKKNIPSPTGHLQDLITQRLQRTQELLAQIQEQEPHRGRMGSYPYLRGIDSPRLRHLKGSDSPHSKGSSSPHSANSPSVRAKDSPSSKSKESPHAKSKDSPRFKSSKNALRSKSIDSPDSKESSSLHMKCIDLTHIKGSQSPLSTGSNSPHMKSTDFYQMSYSPNFRNMKGGDSPLGEALDWDSRRAAAERLLQEAISSWREAKEVLAEVKELQARQRREELSKTGMASQKLQQKSP.

Disordered stretches follow at residues 1-23, 208-296, 313-439, and 497-520; these read MKKS…QPDK, SLDK…GHLQ, IQEQ…KSTD, and QARQ…QKSP. The 112-residue stretch at 20–131 folds into the PH domain; that stretch reads QPDKVGWIRR…WINVLNTAIT (112 aa). A compositionally biased stretch (polar residues) spans 227–241; it reads PASNTEAQEKTSSLP. Basic and acidic residues-rich tracts occupy residues 242-255 and 333-347; these read RKSE…DHPR and DSPR…DSPH. Residues 348–361 show a composition bias toward low complexity; sequence SKGSSSPHSANSPS. Basic and acidic residues-rich tracts occupy residues 363–385 and 396–418; these read RAKD…DSPR and KSID…DLTH. The span at 420-439 shows a compositional bias: polar residues; sequence KGSQSPLSTGSNSPHMKSTD. Over residues 497–506 the composition is skewed to basic and acidic residues; the sequence is QARQRREELS. Over residues 509 to 520 the composition is skewed to polar residues; that stretch reads GMASQKLQQKSP.

Post-translationally, C-terminal fragments could be released during apoptosis via caspase-3-dependent cleavage.

It localises to the membrane. The protein resides in the nucleus. It is found in the cytoplasm. In terms of biological role, plays a role in the regulation of the actin cytoskeleton through its interactions with actin capping protein (CP). This Danio rerio (Zebrafish) protein is Pleckstrin homology domain-containing family O member 1-A (plekho1a).